The chain runs to 299 residues: Ribosome-inactivating protein saporin-6 (299 aa).

The signal sequence occupies residues 1-24; it reads MKIYVVATIAWILLQFSAWTTTDA. E200 is a catalytic residue. A propeptide spanning residues 278–299 is cleaved from the precursor; sequence SSNEANSTVRHYGPLKPTLLIT. N-linked (GlcNAc...) asparagine glycosylation is present at N283.

This sequence belongs to the ribosome-inactivating protein family. Type 1 RIP subfamily. Seeds and leaves of the plant.

The enzyme catalyses Endohydrolysis of the N-glycosidic bond at one specific adenosine on the 28S rRNA.. Ribosome-inactivating protein of type 1, inhibits protein synthesis in animal cells. Useful as immunotoxin for pharmacological applications. The sequence is that of Ribosome-inactivating protein saporin-6 (SAP6) from Saponaria officinalis (Common soapwort).